The chain runs to 85 residues: N.vectensis toxin 1 6 (85 aa).

The first 20 residues, 1–20, serve as a signal peptide directing secretion; it reads MASFKIVIVCLALLVAVACA. A propeptide spanning residues 21–36 is cleaved from the precursor; it reads RRRDMMSDDELDYHYS. Disulfide bonds link Cys-42/Cys-82, Cys-44/Cys-72, and Cys-65/Cys-83.

Belongs to the sea anemone sodium channel inhibitory toxin family. Type II subfamily. As to expression, expressed in ectodermal glands and in clumps outside of the extodermal layer. Is not expressed in nematocytes. In adult female tissues, shows similar expression levels in mesenteries (gametes-producing tissue), tentacles, pharynx and physa.

It localises to the secreted. Functionally, binds to site 3 of voltage-gated sodium channels and inhibits the inactivation process. Is highly active on DmNav1/TipE (drosophila) and is only extremely weakly active on rat Nav1.4-beta-1/SCN4A-SCN1B, and on human Nav1.5-beta-1/SCN5A-beta-1. This reveals high specificity for arthropod over mammalian channels. In vivo, when released into the medium, this recombinant toxin induces impaired swimming, paralysis and death of the crustacean A.nauplii within several hours. Also causes paralysis of cherry shrimps immediately after injection at very low doses. Its effect on zebrafish (D.rerio) larvae is also rapid, since it induces tail twitching accompanied by impaired swimming after 20 minutes and complete paralysis within 45 minutes. It has also been observed to cause death of zebrafish larvae within 1 hour. This is N.vectensis toxin 1 6 from Nematostella vectensis (Starlet sea anemone).